The chain runs to 403 residues: Glucosyl-3-phosphoglycerate synthase (403 aa).

Aspartate 150 provides a ligand contact to a divalent metal cation. (2R)-3-phosphoglycerate is bound at residue 189–192 (GRVT). Histidine 273 lines the a divalent metal cation pocket.

Belongs to the glycosyltransferase 2 family. Homodimer. Requires Mn(2+) as cofactor. The cofactor is Co(2+). Mg(2+) serves as cofactor. Ni(2+) is required as a cofactor.

The enzyme catalyses an NDP-alpha-D-glucose + (2R)-3-phosphoglycerate = (2R)-2-O-(alpha-D-glucopyranosyl)-3-phospho-glycerate + a ribonucleoside 5'-diphosphate + H(+). In terms of biological role, involved in the biosynthesis of 6-O-methylglucose lipopolysaccarides (MGLPs). Catalyzes the transfer of a glucose (Glc) moiety from uridine diphosphate (UDP-Glc) to the position 2 of 3-phospho-D-glycerate (3-PGA) to form glucosyl-3-phosphoglycerate (GPG). GpgS is most active with UDP-glucose, followed by GDP-glucose, ADP-glucose, and to a lesser extent, TDP-glucose. 3-PGA is the only acceptor for these glucosyl donors. The sequence is that of Glucosyl-3-phosphoglycerate synthase from Persephonella marina (strain DSM 14350 / EX-H1).